The following is a 157-amino-acid chain: 2-C-methyl-D-erythritol 2,4-cyclodiphosphate synthase (157 aa).

A divalent metal cation is bound by residues Asp-9 and His-11. 4-CDP-2-C-methyl-D-erythritol 2-phosphate contacts are provided by residues 9–11 (DVH) and 35–36 (HS). Residue His-43 participates in a divalent metal cation binding. 4-CDP-2-C-methyl-D-erythritol 2-phosphate-binding positions include 57–59 (DIG), 62–66 (FPDTD), 101–107 (AEKPKMA), 133–136 (TTTE), Phe-140, and Arg-143.

It belongs to the IspF family. Homotrimer. Requires a divalent metal cation as cofactor.

It catalyses the reaction 4-CDP-2-C-methyl-D-erythritol 2-phosphate = 2-C-methyl-D-erythritol 2,4-cyclic diphosphate + CMP. Its pathway is isoprenoid biosynthesis; isopentenyl diphosphate biosynthesis via DXP pathway; isopentenyl diphosphate from 1-deoxy-D-xylulose 5-phosphate: step 4/6. Its function is as follows. Involved in the biosynthesis of isopentenyl diphosphate (IPP) and dimethylallyl diphosphate (DMAPP), two major building blocks of isoprenoid compounds. Catalyzes the conversion of 4-diphosphocytidyl-2-C-methyl-D-erythritol 2-phosphate (CDP-ME2P) to 2-C-methyl-D-erythritol 2,4-cyclodiphosphate (ME-CPP) with a corresponding release of cytidine 5-monophosphate (CMP). The polypeptide is 2-C-methyl-D-erythritol 2,4-cyclodiphosphate synthase (Listeria innocua serovar 6a (strain ATCC BAA-680 / CLIP 11262)).